We begin with the raw amino-acid sequence, 458 residues long: Argininosuccinate lyase (458 aa).

It belongs to the lyase 1 family. Argininosuccinate lyase subfamily.

Its subcellular location is the cytoplasm. It catalyses the reaction 2-(N(omega)-L-arginino)succinate = fumarate + L-arginine. The protein operates within amino-acid biosynthesis; L-arginine biosynthesis; L-arginine from L-ornithine and carbamoyl phosphate: step 3/3. This chain is Argininosuccinate lyase, found in Neisseria meningitidis serogroup C (strain 053442).